Reading from the N-terminus, the 327-residue chain is Tryptophan--tRNA ligase (327 aa).

ATP-binding positions include 9–11 and 17–18; these read RPT and GN. The 'HIGH' region motif lies at 10-18; sequence PTGNLHLGN. D133 provides a ligand contact to L-tryptophan. ATP is bound by residues 145–147, V186, and 194–198; these read GKD and KMGKS. The 'KMSKS' region motif lies at 194-198; it reads KMGKS.

The protein belongs to the class-I aminoacyl-tRNA synthetase family. In terms of assembly, homodimer.

It is found in the cytoplasm. The catalysed reaction is tRNA(Trp) + L-tryptophan + ATP = L-tryptophyl-tRNA(Trp) + AMP + diphosphate + H(+). Functionally, catalyzes the attachment of tryptophan to tRNA(Trp). This chain is Tryptophan--tRNA ligase, found in Porphyromonas gingivalis (strain ATCC BAA-308 / W83).